Reading from the N-terminus, the 124-residue chain is Fluoride-specific ion channel FluC 1 (124 aa).

Transmembrane regions (helical) follow at residues 1–21 (MCAV…ALGA), 30–50 (LWPG…LLGY), 64–84 (FLGV…VDAV), and 93–113 (LYVV…MLAG). Positions 71 and 74 each coordinate Na(+).

This sequence belongs to the fluoride channel Fluc/FEX (TC 1.A.43) family.

The protein localises to the cell membrane. The enzyme catalyses fluoride(in) = fluoride(out). Its activity is regulated as follows. Na(+) is not transported, but it plays an essential structural role and its presence is essential for fluoride channel function. In terms of biological role, fluoride-specific ion channel. Important for reducing fluoride concentration in the cell, thus reducing its toxicity. The chain is Fluoride-specific ion channel FluC 1 from Rhodococcus jostii (strain RHA1).